The primary structure comprises 918 residues: Serine/threonine-protein kinase D1 (918 aa).

Tyrosine 93 carries the post-translational modification Phosphotyrosine. A Phorbol-ester/DAG-type 1 zinc finger spans residues proline 144–cysteine 194. A phosphoserine mark is found at serine 203, serine 206, serine 217, and serine 221. Residues proline 276–cysteine 326 form a Phorbol-ester/DAG-type 2 zinc finger. Disordered regions lie at residues serine 338–leucine 362 and alanine 379–isoleucine 410. Over residues valine 345 to aspartate 355 the composition is skewed to acidic residues. Phosphoserine is present on serine 351. A compositionally biased stretch (polar residues) spans arginine 400–isoleucine 410. Phosphoserine; by MAPK13 is present on residues serine 403 and serine 407. Residues threonine 428–methionine 547 enclose the PH domain. A Phosphotyrosine modification is found at tyrosine 438. The residue at position 454 (serine 454) is a Phosphoserine. The residue at position 469 (tyrosine 469) is a Phosphotyrosine; by ABL. Position 508 is a phosphotyrosine (tyrosine 508). At serine 554 the chain carries Phosphoserine. One can recognise a Protein kinase domain in the interval isoleucine 589–leucine 845. ATP-binding positions include leucine 595–valine 603 and lysine 618. Residue aspartate 712 is the Proton acceptor of the active site. A Phosphoserine; by PKC/PRKCD modification is found at serine 744. Serine 748 is subject to Phosphoserine; by autocatalysis and PKC/PRKCD. Tyrosine 755 is subject to Phosphotyrosine. Serine 916 carries the post-translational modification Phosphoserine; by autocatalysis.

It belongs to the protein kinase superfamily. CAMK Ser/Thr protein kinase family. PKD subfamily. In terms of assembly, interacts (via N-terminus) with ADAP1/CENTA1. Interacts with MAPK13. Interacts with DAPK1 in an oxidative stress-regulated manner. Interacts with USP28; the interaction induces phosphorylation of USP28 and activated KRAS-mediated stabilization of ZNF304. Interacts with AKAP13 (via C-terminal domain). Mg(2+) serves as cofactor. In terms of processing, phosphorylated at Ser-403 and Ser-407 by MAPK13 during regulation of insulin secretion in pancreatic beta cells. Phosphorylated by DAPK1. Phosphorylated at Tyr-93 and by ABL at Tyr-469, which primes the kinase in response to oxidative stress, and promotes a second step activating phosphorylation at Ser-744/Ser-748 by PKRD. Phosphorylated at Ser-916 upon S.enterica infection in macrophages.

The protein resides in the cytoplasm. The protein localises to the cell membrane. Its subcellular location is the golgi apparatus. It localises to the trans-Golgi network. The catalysed reaction is L-seryl-[protein] + ATP = O-phospho-L-seryl-[protein] + ADP + H(+). The enzyme catalyses L-threonyl-[protein] + ATP = O-phospho-L-threonyl-[protein] + ADP + H(+). Its activity is regulated as follows. Activated by DAG and phorbol esters. Phorbol-ester/DAG-type domain 1 binds DAG with high affinity and appears to play the dominant role in mediating translocation to the cell membrane and trans-Golgi network. Phorbol-ester/DAG-type domain 2 binds phorbol ester with higher affinity. Autophosphorylation of Ser-748 and phosphorylation of Ser-744 by PKC relieves auto-inhibition by the PH domain. Phosphorylation on Tyr-469 by the SRC-ABL1 pathway in response to oxidative stress, is also required for activation. Activated by DAPK1 under oxidative stress. Serine/threonine-protein kinase that converts transient diacylglycerol (DAG) signals into prolonged physiological effects downstream of PKC, and is involved in the regulation of MAPK8/JNK1 and Ras signaling, Golgi membrane integrity and trafficking, cell survival through NF-kappa-B activation, cell migration, cell differentiation by mediating HDAC7 nuclear export, cell proliferation via MAPK1/3 (ERK1/2) signaling, and plays a role in cardiac hypertrophy, VEGFA-induced angiogenesis, genotoxic-induced apoptosis and flagellin-stimulated inflammatory response. Phosphorylates the epidermal growth factor receptor (EGFR) on dual threonine residues, which leads to the suppression of epidermal growth factor (EGF)-induced MAPK8/JNK1 activation and subsequent JUN phosphorylation. Phosphorylates RIN1, inducing RIN1 binding to 14-3-3 proteins YWHAB, YWHAE and YWHAZ and increased competition with RAF1 for binding to GTP-bound form of Ras proteins (NRAS, HRAS and KRAS). Acts downstream of the heterotrimeric G-protein beta/gamma-subunit complex to maintain the structural integrity of the Golgi membranes, and is required for protein transport along the secretory pathway. In the trans-Golgi network (TGN), regulates the fission of transport vesicles that are on their way to the plasma membrane. May act by activating the lipid kinase phosphatidylinositol 4-kinase beta (PI4KB) at the TGN for the local synthesis of phosphorylated inositol lipids, which induces a sequential production of DAG, phosphatidic acid (PA) and lyso-PA (LPA) that are necessary for membrane fission and generation of specific transport carriers to the cell surface. Under oxidative stress, is phosphorylated at Tyr-469 via SRC-ABL1 and contributes to cell survival by activating IKK complex and subsequent nuclear translocation and activation of NFKB1. Involved in cell migration by regulating integrin alpha-5/beta-3 recycling and promoting its recruitment in newly forming focal adhesion. In osteoblast differentiation, mediates the bone morphogenetic protein 2 (BMP2)-induced nuclear export of HDAC7, which results in the inhibition of HDAC7 transcriptional repression of RUNX2. In neurons, plays an important role in neuronal polarity by regulating the biogenesis of TGN-derived dendritic vesicles, and is involved in the maintenance of dendritic arborization and Golgi structure in hippocampal cells. May potentiate mitogenesis induced by the neuropeptide bombesin or vasopressin by mediating an increase in the duration of MAPK1/3 (ERK1/2) signaling, which leads to accumulation of immediate-early gene products including FOS that stimulate cell cycle progression. Plays an important role in the proliferative response induced by low calcium in keratinocytes, through sustained activation of MAPK1/3 (ERK1/2) pathway. Downstream of novel PKC signaling, plays a role in cardiac hypertrophy by phosphorylating HDAC5, which in turn triggers XPO1/CRM1-dependent nuclear export of HDAC5, MEF2A transcriptional activation and induction of downstream target genes that promote myocyte hypertrophy and pathological cardiac remodeling. Mediates cardiac troponin I (TNNI3) phosphorylation at the PKA sites, which results in reduced myofilament calcium sensitivity, and accelerated crossbridge cycling kinetics. The PRKD1-HDAC5 pathway is also involved in angiogenesis by mediating VEGFA-induced specific subset of gene expression, cell migration, and tube formation. In response to VEGFA, is necessary and required for HDAC7 phosphorylation which induces HDAC7 nuclear export and endothelial cell proliferation and migration. During apoptosis induced by cytarabine and other genotoxic agents, PRKD1 is cleaved by caspase-3 at Asp-378, resulting in activation of its kinase function and increased sensitivity of cells to the cytotoxic effects of genotoxic agents. In epithelial cells, is required for transducing flagellin-stimulated inflammatory responses by binding and phosphorylating TLR5, which contributes to MAPK14/p38 activation and production of inflammatory cytokines. Acts as an activator of NLRP3 inflammasome assembly by mediating phosphorylation of NLRP3. May play a role in inflammatory response by mediating activation of NF-kappa-B. May be involved in pain transmission by directly modulating TRPV1 receptor. Plays a role in activated KRAS-mediated stabilization of ZNF304 in colorectal cancer (CRC) cells. Regulates nuclear translocation of transcription factor TFEB in macrophages upon live S.enterica infection. The sequence is that of Serine/threonine-protein kinase D1 (Prkd1) from Mus musculus (Mouse).